A 94-amino-acid polypeptide reads, in one-letter code: Co-chaperonin GroES (94 aa).

It belongs to the GroES chaperonin family. As to quaternary structure, heptamer of 7 subunits arranged in a ring. Interacts with the chaperonin GroEL.

The protein localises to the cytoplasm. In terms of biological role, together with the chaperonin GroEL, plays an essential role in assisting protein folding. The GroEL-GroES system forms a nano-cage that allows encapsulation of the non-native substrate proteins and provides a physical environment optimized to promote and accelerate protein folding. GroES binds to the apical surface of the GroEL ring, thereby capping the opening of the GroEL channel. This is Co-chaperonin GroES from Lactobacillus helveticus (strain DPC 4571).